Here is a 93-residue protein sequence, read N- to C-terminus: UPF0728 protein C10orf53 homolog (93 aa).

This sequence belongs to the UPF0728 family.

The protein is UPF0728 protein C10orf53 homolog of Xenopus tropicalis (Western clawed frog).